The following is a 332-amino-acid chain: Caffeoylshikimate esterase (332 aa).

Positions 1-13 (MPSEAESSANSAP) are enriched in low complexity. Positions 1–26 (MPSEAESSANSAPATPPPPPNFWGTM) are disordered. Ser-147 functions as the Nucleophile in the catalytic mechanism. Catalysis depends on charge relay system residues Asp-268 and His-298.

This sequence belongs to the AB hydrolase superfamily. Monoacylglycerol lipase family. As to quaternary structure, interacts with ACBP2. As to expression, expressed in vasculature of roots and leaves, stems, flowers and siliques.

The protein resides in the cell membrane. It catalyses the reaction 5-O-[(E)-caffeoyl]-shikimate + H2O = shikimate + (E)-caffeate + H(+). Esterase involved in the biosynthesis of lignin. Hydrolyzes caffeoylshikimate into caffeate and shikimate. Together with 4-coumarate--CoA ligase (4CL), acts on an alternative reaction for the formation of caffeoyl-CoA and bypasses the second reaction of shikimate O-hydroxycinnamoyltransferase (HST). Also accepts 4-coumaroylshikimate as substrate, but with lower activity. According to PubMed:20345607 and PubMed:22915575, possesses monoacylglycerol O-acyltransferase, monoacylglycerol lipase and lysophospholipase activities in vitro. With the association of ACBP2, may promote the degradation of lysophosphatidylcholine and detoxify the peroxidized membrane in response to cadmium-induced oxidative stress. However these results require additional confirmation in vivo. This chain is Caffeoylshikimate esterase (CSE), found in Arabidopsis thaliana (Mouse-ear cress).